Consider the following 628-residue polypeptide: Voltage-gated potassium channel KCNC4 (628 aa).

2 disordered regions span residues 1–24 and 62–88; these read MISS…SKTC and LAWL…GSSG. An inactivation gate region spans residues 1-28; that stretch reads MISSVCVSSYRGRKSGNKPPSKTCLKEE. Residues 1–230 are Cytoplasmic-facing; sequence MISSVCVSSY…EDPYSSRAAR (230 aa). Residues Ser8, Ser9, Ser15, and Ser21 each carry the phosphoserine modification. Residues 77–88 show a composition bias toward gly residues; that stretch reads DGGGAGSSGSSG. The Zn(2+) site is built by His120, Cys126, Cys147, and Cys148. The chain crosses the membrane as a helical span at residues 231–251; the sequence is VVAFASLFFILVSITTFCLET. Asn260 and Asn269 each carry an N-linked (GlcNAc...) asparagine glycan. A helical membrane pass occupies residues 282–302; that stretch reads EPILTYIEGVCVMWFTLEFLV. At 303-316 the chain is on the cytoplasmic side; it reads RIVCCPDTLDFVKN. A helical transmembrane segment spans residues 317 to 337; it reads LLNIIDFVAILPFYLEVGLSG. The chain crosses the membrane as a helical; Voltage-sensor span at residues 349–368; the sequence is FLRVVRFVRILRIFKLTRHF. Over 369-384 the chain is Cytoplasmic; that stretch reads VGLRVLGHTLRASTNE. A helical transmembrane segment spans residues 385-405; that stretch reads FLLLIIFLALGVLIFATMIYY. 4 residues coordinate K(+): Thr440, Leu441, Gly442, and Tyr443. The short motif at 440-445 is the Selectivity filter element; it reads TLGYGD. A helical membrane pass occupies residues 456–476; that stretch reads VGALCALAGVLTIAMPVPVIV. The Cytoplasmic segment spans residues 477–628; the sequence is NNFGMYYSLA…CVPVSHTCAL (152 aa). Residues 493–584 are disordered; it reads PKKRKKHVPR…RRALRRSGTR (92 aa). Positions 531–546 are enriched in basic and acidic residues; the sequence is AREEGVVERKRADSKQ.

It belongs to the potassium channel family. C (Shaw) (TC 1.A.1.2) subfamily. Kv3.4/KCNC4 sub-subfamily. Homotetramer. Heterotetramer of potassium channel proteins. In terms of processing, phosphorylation of serine residues in the inactivation gate inhibits rapid channel closure.

The protein localises to the membrane. The catalysed reaction is K(+)(in) = K(+)(out). Its function is as follows. Voltage-gated potassium channel that opens in response to the voltage difference across the membrane, forming a potassium-selective channel through which potassium ions pass in accordance with their electrochemical gradient. The channel displays rapid activation and inactivation kinetics. The protein is Voltage-gated potassium channel KCNC4 of Mus musculus (Mouse).